Reading from the N-terminus, the 538-residue chain is Ubiquitin domain-containing protein DSK2a (538 aa).

One can recognise a Ubiquitin-like domain in the interval 18-93 (VAVNVRCSNG…VHMVRGFVPS (76 aa)). Positions 95-120 (PSAPAANAGNQTTAPQAVGSNDSSNL) are disordered. A compositionally biased stretch (polar residues) spans 102–119 (AGNQTTAPQAVGSNDSSN). STI1 domains follow at residues 138–179 (GNAM…QNLM) and 192–231 (NPQMRELVDRNPELGHVLNDPSILRQTLEAARNPELMREM). The segment at 289–316 (QGVTTQGSDTSNNISAPNAETGTPNANP) is disordered. STI1 domains are found at residues 357–394 (SPLGATPDASQLSQILQNPAMSQMMQSVLSNPQYMNQL) and 398–433 (NPQLRSMLDMNPQLREMMQNPDFLRQFSSPEMMQQM). Positions 491-535 (PPEERFATQLQQLQEMGFYDRAENIRALLATNGNVNAAVERLLGS) constitute a UBA domain.

Interacts with 'Lys-48'-linked polyubiquitin chains via its UBA domain. Interacts with RPN10 and RPN13. Interacts with PEX2 and PEX12. In terms of tissue distribution, ubiquitous with a strong expression level in inflorescence.

The protein resides in the nucleus. The protein localises to the cytoplasm. Binds and presumably selects ubiquitin-conjugates for destruction. Prefers multiubiquitin chains rather than single ubiquitins, with a binding affinity for 'Lys-48'-linked ubiquitin chains. Acts as a ubiquitin receptor that associates with the 26S proteasomal docking subunit RPN10 for the indirect recognition of ubiquitinated substrates of ubiquitin/26S proteasome-mediated proteolysis (UPP). This chain is Ubiquitin domain-containing protein DSK2a (DSK2A), found in Arabidopsis thaliana (Mouse-ear cress).